We begin with the raw amino-acid sequence, 54 residues long: MHKTKSTRKIILVCEDCLSRNYSLNKSNLTQKERLEIKKFCSMCNKHTLHKETR.

Belongs to the bacterial ribosomal protein bL33 family.

This Mesoplasma florum (strain ATCC 33453 / NBRC 100688 / NCTC 11704 / L1) (Acholeplasma florum) protein is Large ribosomal subunit protein bL33A.